A 395-amino-acid polypeptide reads, in one-letter code: Phosphoserine aminotransferase (395 aa).

Thr20 is subject to Phosphothreonine. Gly80–Thr81 lines the pyridoxal 5'-phosphate pocket. At Ser112 the chain carries Phosphoserine. Pyridoxal 5'-phosphate contacts are provided by Trp113, Thr170, Asp194, and Gln217. Lys218 bears the N6-(pyridoxal phosphate)lysine mark. A pyridoxal 5'-phosphate-binding site is contributed by Asn271 to Thr272.

Belongs to the class-V pyridoxal-phosphate-dependent aminotransferase family. SerC subfamily. In terms of assembly, homodimer. The cofactor is pyridoxal 5'-phosphate.

It carries out the reaction O-phospho-L-serine + 2-oxoglutarate = 3-phosphooxypyruvate + L-glutamate. The catalysed reaction is 4-(phosphooxy)-L-threonine + 2-oxoglutarate = (R)-3-hydroxy-2-oxo-4-phosphooxybutanoate + L-glutamate. The protein operates within amino-acid biosynthesis; L-serine biosynthesis; L-serine from 3-phospho-D-glycerate: step 2/3. In terms of biological role, phosphoserine aminotransferase (PSAT) is a pyridoxal 5'-phosphate-dependent enzyme involved in the second step of the phosphorylated pathway of serine biosynthesis. Catalyzes the reversible conversion of 3-phosphohydroxypyruvate to phosphoserine and of 3-hydroxy-2-oxo-4-phosphonooxybutanoate to phosphohydroxythreonine. Plays an indirect role in purine biosynthesis. This is Phosphoserine aminotransferase from Saccharomyces cerevisiae (strain ATCC 204508 / S288c) (Baker's yeast).